The primary structure comprises 112 residues: FK506-binding protein 1 (112 aa).

Positions 1–10 are enriched in polar residues; it reads MSAPATTQVE. The segment at 1–20 is disordered; that stretch reads MSAPATTQVEILQEGDGKTF. A PPIase FKBP-type domain is found at 24 to 112; sequence GDLVTIHYTG…LFDVELLNVN (89 aa).

It belongs to the FKBP-type PPIase family. FKBP1 subfamily.

The protein resides in the cytoplasm. It carries out the reaction [protein]-peptidylproline (omega=180) = [protein]-peptidylproline (omega=0). Inhibited by both FK506 and rapamycin. Its function is as follows. PPIases accelerate the folding of proteins. It catalyzes the cis-trans isomerization of proline imidic peptide bonds in oligopeptides. This Debaryomyces hansenii (strain ATCC 36239 / CBS 767 / BCRC 21394 / JCM 1990 / NBRC 0083 / IGC 2968) (Yeast) protein is FK506-binding protein 1 (FPR1).